A 504-amino-acid polypeptide reads, in one-letter code: Maturase K (504 aa).

This sequence belongs to the intron maturase 2 family. MatK subfamily.

The protein resides in the plastid. It localises to the chloroplast. Usually encoded in the trnK tRNA gene intron. Probably assists in splicing its own and other chloroplast group II introns. The polypeptide is Maturase K (Quercus suber (Cork oak)).